The chain runs to 375 residues: 4,4'-diaponeurosporenoate glycosyltransferase (375 aa).

The next 4 membrane-spanning stretches (helical) occupy residues 3–23 (WLSRILTVIVTMSMACGALIF), 164–184 (FYEGFSAIFNLMTVVGMNVFS), 277–297 (IMTAIVLWLFGSIASILGLCL), and 330–350 (FSNLLMVCHPLLFMFFTKIFI).

The protein belongs to the glycosyltransferase 2 family. CrtQ subfamily.

Its subcellular location is the cell membrane. The protein operates within carotenoid biosynthesis; staphyloxanthin biosynthesis; staphyloxanthin from farnesyl diphosphate: step 4/5. Catalyzes the glycosylation of 4,4'-diaponeurosporenoate, i.e. the esterification of glucose at the C1'' position with the carboxyl group of 4,4'-diaponeurosporenic acid, to form glycosyl-4,4'-diaponeurosporenoate. This is a step in the biosynthesis of staphyloxanthin, an orange pigment present in most staphylococci strains. This Staphylococcus aureus (strain Mu50 / ATCC 700699) protein is 4,4'-diaponeurosporenoate glycosyltransferase (crtQ).